The sequence spans 158 residues: uncharacterized protein (158 aa).

In terms of biological role, the presence of the two linear plasmids, termed pGKL1 and pGKL2, in strains of Kluyveromyces lactis confers the killer phenotype to the host cell, by promoting the secretion of a toxin able to inhibit the growth of sensitive strains. This is an uncharacterized protein from Kluyveromyces lactis (strain ATCC 8585 / CBS 2359 / DSM 70799 / NBRC 1267 / NRRL Y-1140 / WM37) (Yeast).